Reading from the N-terminus, the 434-residue chain is Glutamyl-tRNA reductase (434 aa).

Substrate contacts are provided by residues 57–60 (TCNR), S116, 121–123 (ETQ), and Q127. C58 serves as the catalytic Nucleophile. Residue 196 to 201 (GAGEMI) participates in NADP(+) binding.

This sequence belongs to the glutamyl-tRNA reductase family. Homodimer.

It carries out the reaction (S)-4-amino-5-oxopentanoate + tRNA(Glu) + NADP(+) = L-glutamyl-tRNA(Glu) + NADPH + H(+). It functions in the pathway porphyrin-containing compound metabolism; protoporphyrin-IX biosynthesis; 5-aminolevulinate from L-glutamyl-tRNA(Glu): step 1/2. Its function is as follows. Catalyzes the NADPH-dependent reduction of glutamyl-tRNA(Glu) to glutamate 1-semialdehyde (GSA). The chain is Glutamyl-tRNA reductase from Burkholderia pseudomallei (strain 1106a).